The primary structure comprises 1031 residues: Protein draper (1031 aa).

A signal peptide spans 1–16 (MLPVILIACLAQLVLA). At 17–800 (QADLKDLDGP…DQSENSSRAS (784 aa)) the chain is on the extracellular side. The EMI domain maps to 25 to 100 (GPNICKRREL…YIASAGECVP (76 aa)). Disulfide bonds link Cys29/Cys88, Cys55/Cys62, Cys87/Cys98, Cys102/Cys111, Cys106/Cys117, and Cys119/Cys128. The N-linked (GlcNAc...) asparagine glycan is linked to Asn73. EGF-like domains are found at residues 99 to 129 (VPHCSEPCQHGRCISPEKCKCDHGYGGPACD), 137 to 172 (YGRNCSMQCDCLNNAVCEPFSGDCECAKGYTGARCA), 180 to 215 (FGANCSEKCRCENGGKCHHVSGECQCAPGFTGPLCD), 223 to 258 (HGAQCQQDCPCQNDGKCQPETGACMCNPGWTGDVCA), 266 to 301 (YGPGCQESCECYKGAPCHHITGQCECPPGYRGERCF), and 309 to 344 (YGFNCSMTCDCANDAMCDRANGTCICNPGWTGAKCA). A glycan (N-linked (GlcNAc...) asparagine) is linked at Asn140. 3 disulfides stabilise this stretch: Cys141–Cys153, Cys147–Cys160, and Cys162–Cys171. N-linked (GlcNAc...) asparagine glycosylation is present at Asn183. Cystine bridges form between Cys184–Cys196, Cys190–Cys203, Cys205–Cys214, Cys227–Cys239, Cys233–Cys246, Cys248–Cys257, Cys270–Cys282, Cys276–Cys289, and Cys291–Cys300. An N-linked (GlcNAc...) asparagine glycan is attached at Asn312. Intrachain disulfides connect Cys313–Cys325, Cys319–Cys332, and Cys334–Cys343. Asn329 carries N-linked (GlcNAc...) asparagine glycosylation. Asn358 is a glycosylation site (N-linked (GlcNAc...) asparagine). 2 consecutive EGF-like domains span residues 398 to 433 (YGPNCELTCNCKNGAKCSPVNGTCLCAPGWRGPTCE) and 484 to 519 (FGQDCAKVCDCHNNAACNPQNGSCTCAAGWTGERCE). 6 cysteine pairs are disulfide-bonded: Cys402–Cys414, Cys408–Cys421, Cys423–Cys432, Cys488–Cys500, Cys494–Cys507, and Cys509–Cys518. A glycan (N-linked (GlcNAc...) asparagine) is linked at Asn418. N-linked (GlcNAc...) asparagine glycosylation is present at Asn504. Asn540, Asn584, and Asn585 each carry an N-linked (GlcNAc...) asparagine glycan. An EGF-like 9 domain is found at 572 to 607 (YGENCDKVCRCLNNSSCDPDSGNCICSAGWTGADCA). Disulfide bonds link Cys576-Cys588, Cys582-Cys595, and Cys597-Cys606. N-linked (GlcNAc...) asparagine glycosylation occurs at Asn630. The 36-residue stretch at 660–695 (YGPGCKLKCNCEHGGECNHVTGQCQCLPGWTGSNCN) folds into the EGF-like 10 domain. 3 disulfides stabilise this stretch: Cys664–Cys676, Cys670–Cys683, and Cys685–Cys694. Asn695 and Asn795 each carry an N-linked (GlcNAc...) asparagine glycan. A helical membrane pass occupies residues 801 to 821 (VALTLVLMTLFACIIFAVFIY). Over 822–1031 (YRRRVSNLKT…SPSSSPKFLK (210 aa)) the chain is Cytoplasmic. Basic and acidic residues predominate over residues 940–954 (KEGYKDPDEYDHLDY). Disordered stretches follow at residues 940 to 964 (KEGYKDPDEYDHLDYSRPSTSQKPH) and 989 to 1031 (TVLL…KFLK). Residues 1009–1031 (DNTNTNLDNVSTASPSSSPKFLK) are compositionally biased toward polar residues.

This sequence belongs to the MEGF family. Interacts (via the cytoplasmic domain) with shark; this is required for the recruitment of drpr and glial cells to severed axons and for the phagocytosis of axonal debris by glial cells following axon injury. Interacts with ced-6. As to quaternary structure, interacts with csw; this results in dephosphorylation of drpr isoform A which is required for the inhibition of glial cell engulfment of axonal debris produced following axonal injury. Post-translationally, phosphorylated on tyrosine residues. Phosphorylation is induced by binding to prtp. It is also induced by binding to the membrane phospholipid phosphatidylserine. Phosphorylation may be mediated directly or indirectly by Src42a and is required for interaction with shark. Dephosphorylated by csw which is required for the inhibition of glial cell engulfment of axonal debris produced following axonal injury. Expressed in adult head (at protein level). Expressed in glia, macrophages and ectoderm (at protein level). Detected in glia around the mushroom body dorsal lobe and in glial processes infiltrating the medial lobe (at protein level). Expressed in adult brain glia including antennal lobe glia (at protein level). Expressed in the larval fat body (at protein level). Expressed in the ovary (at protein level). Isoform B: Predominant isoform in adult glia.

Its subcellular location is the cell membrane. It localises to the cell projection. It is found in the axon. The protein resides in the cytoplasm. The protein localises to the postsynaptic cell membrane. Its subcellular location is the cell cortex. It localises to the phagocytic cup. It is found in the cytoplasmic vesicle. The protein resides in the phagosome. Receptor which is involved in the phagocytosis of a variety of cells including apoptotic cells, severed and pruned axons, degenerating dendrites, salivary gland cells, germline cells and bacteria. Binds to the ligand prtp which relocates from the endoplasmic reticulum to the cell surface during apoptosis. Ligand-binding may promote tyrosine phosphorylation mediated by Src42a, interaction with shark and subsequent activation of phagocytosis. Also binds to the membrane phospholipid phosphatidylserine which is exposed on the surface of apoptotic cells. Required for the phagocytosis of apoptotic cells by macrophages. Also required for the phagocytosis of apoptotic neurons by glial cells in the embryonic nervous system. Acts downstream of NimC4/simu in the glial phagocytosis of apoptotic neurons. Plays a role in the glial engulfment of larval axons as part of programmed axon pruning during metamorphosis. Also mediates glial cell clearance of severed axons following axonal injury. Required for the engulfment of degenerating dendrites by epidermal cells. Required in the ovary for the engulfment and subsequent processing of dying germline cells by follicular epithelial cells through activation of the JNK/bsk pathway. Plays a role in neuromuscular junction development by mediating the clearance of presynaptic debris and immature boutons which are shed by growing synapses. Required for larval salivary gland cell death which occurs following a rise in steroid levels after puparium formation. Also involved in bacterial phagocytosis. Required for hemocyte phagocytosis of the Gram-positive bacterium S.aureus. Lipoteichoic acid, synthesized by the S.aureus lipoteichoic acid synthase ltaS, acts as a ligand for drpr in this process. Together with Src42a and shark, promotes the migration of macrophages to sites of wounding as part of a signaling cascade where Scr42a detects production of hydrogen peroxide at wound sites which triggers phosphorylation of drpr and subsequent recruitment and activation of shark. Also required for macrophage priming which occurs following phagocytosis of apoptotic cells and ensures that macrophages develop a form of molecular memory that allows them to later mount an inflammatory response to tissue damage and bacterial infection. Is also an essential factor in the regulation of muscle development and myogenesis, and as a consequence is required for normal locomotion. Likely to control the balance between skeletal muscle satellite cells proliferation and differentiation through regulation of the notch signaling pathway. Its function is as follows. Promotes engulfment of axonal debris by glial cells following axonal injury. Functionally, potently inhibits glial cell engulfment of axonal debris produced following axonal injury. The sequence is that of Protein draper from Drosophila melanogaster (Fruit fly).